Here is a 165-residue protein sequence, read N- to C-terminus: 6,7-dimethyl-8-ribityllumazine synthase 2 (165 aa).

Residues tryptophan 24, 56–58 (SFE), and 80–82 (LVV) each bind 5-amino-6-(D-ribitylamino)uracil. Catalysis depends on arginine 88, which acts as the Proton donor. A 5-amino-6-(D-ribitylamino)uracil-binding site is contributed by serine 113. (2S)-2-hydroxy-3-oxobutyl phosphate is bound at residue histidine 127.

This sequence belongs to the DMRL synthase family.

It catalyses the reaction (2S)-2-hydroxy-3-oxobutyl phosphate + 5-amino-6-(D-ribitylamino)uracil = 6,7-dimethyl-8-(1-D-ribityl)lumazine + phosphate + 2 H2O + H(+). It functions in the pathway cofactor biosynthesis; riboflavin biosynthesis; riboflavin from 2-hydroxy-3-oxobutyl phosphate and 5-amino-6-(D-ribitylamino)uracil: step 1/2. In terms of biological role, catalyzes the formation of 6,7-dimethyl-8-ribityllumazine by condensation of 5-amino-6-(D-ribitylamino)uracil with 3,4-dihydroxy-2-butanone 4-phosphate. This is the penultimate step in the biosynthesis of riboflavin. This Bradyrhizobium diazoefficiens (strain JCM 10833 / BCRC 13528 / IAM 13628 / NBRC 14792 / USDA 110) protein is 6,7-dimethyl-8-ribityllumazine synthase 2.